A 176-amino-acid chain; its full sequence is Dual-action ribosomal maturation protein DarP (176 aa).

Over residues 1–10 (MTVPNHQQDI) the composition is skewed to polar residues. Residues 1–22 (MTVPNHQQDISDSDLESRPSKT) form a disordered region.

This sequence belongs to the DarP family.

The protein localises to the cytoplasm. Functionally, member of a network of 50S ribosomal subunit biogenesis factors which assembles along the 30S-50S interface, preventing incorrect 23S rRNA structures from forming. Promotes peptidyl transferase center (PTC) maturation. This is Dual-action ribosomal maturation protein DarP from Nitrosomonas eutropha (strain DSM 101675 / C91 / Nm57).